A 645-amino-acid chain; its full sequence is Cysteine-rich receptor-like protein kinase 19 (645 aa).

Residues 1 to 20 (MSSLISFIFLFLFSSITASA) form the signal peptide. Topologically, residues 21–262 (QNTFYLYHNC…PRPGKGGNSS (242 aa)) are extracellular. 2 Gnk2-homologous domains span residues 24–129 (FYLY…NRNI) and 135–239 (TDGG…NYAF). 7 N-linked (GlcNAc...) asparagine glycosylation sites follow: Asn-29, Asn-39, Asn-57, Asn-101, Asn-185, Asn-241, and Asn-260. A helical membrane pass occupies residues 263–283 (VIIIAVVVPITVLFLLLVAVF). At 284–645 (SVRAKNKRTL…EASITRVTPR (362 aa)) the chain is on the cytoplasmic side. The Protein kinase domain occupies 326 to 603 (FLPINKLGQG…IVQMLTTSLI (278 aa)). Residues 332–340 (LGQGGFGEV) and Lys-354 contribute to the ATP site. At Tyr-399 the chain carries Phosphotyrosine. Asp-451 functions as the Proton acceptor in the catalytic mechanism. Thr-491 carries the post-translational modification Phosphothreonine. Phosphotyrosine is present on Tyr-499. The segment at 616–645 (RSKQEQAGPSIDSSTHCSVDEASITRVTPR) is disordered. Over residues 620-632 (EQAGPSIDSSTHC) the composition is skewed to polar residues.

This sequence belongs to the protein kinase superfamily. Ser/Thr protein kinase family. CRK subfamily. As to quaternary structure, interacts with MWL1.

Its subcellular location is the membrane. The catalysed reaction is L-seryl-[protein] + ATP = O-phospho-L-seryl-[protein] + ADP + H(+). It carries out the reaction L-threonyl-[protein] + ATP = O-phospho-L-threonyl-[protein] + ADP + H(+). The chain is Cysteine-rich receptor-like protein kinase 19 (CRK19) from Arabidopsis thaliana (Mouse-ear cress).